Reading from the N-terminus, the 200-residue chain is Prostamide/prostaglandin F synthase (200 aa).

Belongs to the peroxiredoxin-like PRXL2 family. Prostamide/prostaglandin F synthase subfamily.

It localises to the cytoplasm. It is found in the cytosol. The catalysed reaction is prostaglandin H2 + [thioredoxin]-dithiol = prostaglandin F2alpha + [thioredoxin]-disulfide. The enzyme catalyses prostamide F2alpha + [thioredoxin]-disulfide = prostamide H2 + [thioredoxin]-dithiol. Catalyzes the reduction of prostaglandin-ethanolamide H(2) (prostamide H(2)) to prostamide F(2alpha) with NADPH as proton donor. Also able to reduce prostaglandin H(2) to prostaglandin F(2alpha). The polypeptide is Prostamide/prostaglandin F synthase (prxl2b) (Salmo salar (Atlantic salmon)).